Consider the following 251-residue polypeptide: Hydroxyacylglutathione hydrolase (251 aa).

Positions 53, 55, 57, 58, 110, 127, and 165 each coordinate Zn(2+).

Belongs to the metallo-beta-lactamase superfamily. Glyoxalase II family. In terms of assembly, monomer. The cofactor is Zn(2+).

It catalyses the reaction an S-(2-hydroxyacyl)glutathione + H2O = a 2-hydroxy carboxylate + glutathione + H(+). It participates in secondary metabolite metabolism; methylglyoxal degradation; (R)-lactate from methylglyoxal: step 2/2. In terms of biological role, thiolesterase that catalyzes the hydrolysis of S-D-lactoyl-glutathione to form glutathione and D-lactic acid. This chain is Hydroxyacylglutathione hydrolase, found in Cronobacter sakazakii (strain ATCC BAA-894) (Enterobacter sakazakii).